The following is a 471-amino-acid chain: Thiohydroximate-O-sulfate sulfur/sulfate-lyase (nitrile-forming) NSP2 (471 aa).

Residues Val2–Ser144 form the Jacalin-type lectin domain. Kelch repeat units lie at residues Lys178–Val226, Ser231–Ala277, Asn281–Gly330, Val332–Lys379, Ile381–Ala435, and Gly446–Ala471. Residue Arg238 is the Proton donor of the active site. Residues Arg238, Ser271, Arg293, Gly322, and Val371 each contribute to the a (Z)-N-(sulfonatooxy)alkanimidothioate site. Catalysis depends on Arg293, which acts as the Proton donor. Residues Glu387, Asp391, and His395 each contribute to the Fe(2+) site. Position 433 (Trp433) interacts with a (Z)-N-(sulfonatooxy)alkanimidothioate.

The protein belongs to the jacalin lectin family. Fe(2+) serves as cofactor. Expressed only in seeds.

The enzyme catalyses a (Z)-N-(sulfonatooxy)alkanimidothioate = a nitrile + sulfur + sulfate. The catalysed reaction is (Z)-phenyl-N-(sulfonatooxy)methanimidothioate = phenylacetonitrile + sulfur + sulfate. It carries out the reaction (Z)-N-(sulfonatooxy)prop-2-enimidothioate = but-3-enenitrile + sulfur + sulfate. It catalyses the reaction (Z)-(indol-3-yl)-N-(sulfonatooxy)methanimidothioate = (indol-3-yl)acetonitrile + sulfur + sulfate. With respect to regulation, the presence of Fe(2+) supports lyase activity in a dose-dependent manner with both benzylglucosinolate and 2-propenylglucosinolate as substrates. More active at pH 7.4 than at pH 6. Specifier protein responsible for constitutive and herbivore-induced simple nitrile formation, especially in seeds. Promotes simple nitriles, but not epithionitrile or thiocyanate formation. Converts allylglucosinolate (allyl-GSL), 2-propenylglucosinolate (sinigrin), indol-3-ylmethylglucosinolate (glucobrassicin), benzylisothiocyanate and benzylglucosinolate (glucotropaeolin) to their corresponding simple nitriles in the presence of myrosinase. Catalyzes mainly the conversion of benzylisothiocyanate when benzylglucosinolate is used as the initial substrate of myrosinase. Involved in the regulation of glucosinolate content in seeds, during stratification and germination. The sequence is that of Thiohydroximate-O-sulfate sulfur/sulfate-lyase (nitrile-forming) NSP2 from Arabidopsis thaliana (Mouse-ear cress).